Here is a 139-residue protein sequence, read N- to C-terminus: ATP synthase epsilon chain 2 (139 aa).

It belongs to the ATPase epsilon chain family. F-type ATPases have 2 components, CF(1) - the catalytic core - and CF(0) - the membrane proton channel. CF(1) has five subunits: alpha(3), beta(3), gamma(1), delta(1), epsilon(1). CF(0) has three main subunits: a, b and c.

Its subcellular location is the cell inner membrane. Functionally, produces ATP from ADP in the presence of a proton gradient across the membrane. The sequence is that of ATP synthase epsilon chain 2 (atpC2) from Ralstonia nicotianae (strain ATCC BAA-1114 / GMI1000) (Ralstonia solanacearum).